We begin with the raw amino-acid sequence, 122 residues long: Large ribosomal subunit protein uL18 (122 aa).

Positions Met1 to Thr24 are disordered. Positions Gln9–Leu21 are enriched in basic residues.

This sequence belongs to the universal ribosomal protein uL18 family. Part of the 50S ribosomal subunit; part of the 5S rRNA/L5/L18/L25 subcomplex. Contacts the 5S and 23S rRNAs.

Its function is as follows. This is one of the proteins that bind and probably mediate the attachment of the 5S RNA into the large ribosomal subunit, where it forms part of the central protuberance. This chain is Large ribosomal subunit protein uL18, found in Synechococcus sp. (strain WH7803).